We begin with the raw amino-acid sequence, 1136 residues long: 3-O-alpha-D-galactosyl-alpha-L-arabinofuranosidase (1136 aa).

A signal peptide spans 1-36 (MGISRNRLVPGLVGLAASAAIVLPLGIGMPVSSATA). Glutamate 194 functions as the Proton donor in the catalytic mechanism. The active-site Nucleophile is glutamate 321. 2 consecutive CBM6 domains span residues 521–656 (QAIE…LLLY) and 669–779 (VTYP…VTTA). The region spanning 987–1045 (KASLKVGETLSLNASVTPDSVADKTVQWTSSDEQVATVDEHGVVKGVKAGTVTITATSV) is the BIG2 domain. The disordered stretch occupies residues 1049-1104 (SRSGSVEVTVAEDSEQKPSGGDGDNNGEQTGKPDGNTGGQTSDSDAGADSGNNQKH). Over residues 1087–1103 (GQTSDSDAGADSGNNQK) the composition is skewed to polar residues. A helical transmembrane segment spans residues 1109–1129 (GAAVAAVAGVAVLLAGAGLLL).

This sequence belongs to the glycosyl hydrolase 39 family.

Its subcellular location is the cell membrane. It localises to the secreted. The protein localises to the cell wall. It catalyses the reaction Hydrolysis of alpha-D-Galp-(1-&gt;3)-L-Araf disaccharides from non-reducing terminals in branches of type II arabinogalactan attached to proteins.. In terms of biological role, hydrolase involved in the degradation of the gum arabic arabinogalactan protein (AGP). Catalyzes the release of 3-O-alpha-D-galactopyranosyl-L-arabinose (alpha-D-Galp-(1-&gt;3)-L-Ara) from gum arabic AGP. Can also release 3-O-beta-L-arabinopyranosyl-L-arabinose (beta-L-Arap-(1-&gt;3)-L-Ara) from gum arabic AGP and larch AGP, but the alpha-D-Galp-(1-&gt;3)-L-Ara release activity is 594-fold higher than the beta-L-Arap-(1-&gt;3)-L-Ara release activity. Exhibits no reactivity toward p-nitrophenyl (pNP)-alpha-Araf or any other tested pNP substrate. Plays a crucial role in gum arabic AGP assimilation in B.longum. The polypeptide is 3-O-alpha-D-galactosyl-alpha-L-arabinofuranosidase (Bifidobacterium longum subsp. longum).